The chain runs to 137 residues: Nucleoside diphosphate kinase (137 aa).

ATP-binding residues include Lys-9, Phe-57, Arg-85, Thr-91, and Arg-102. The Pros-phosphohistidine intermediate role is filled by His-119.

It belongs to the NDK family. As to quaternary structure, homotetramer. Mg(2+) is required as a cofactor.

The protein resides in the cytoplasm. The enzyme catalyses a 2'-deoxyribonucleoside 5'-diphosphate + ATP = a 2'-deoxyribonucleoside 5'-triphosphate + ADP. The catalysed reaction is a ribonucleoside 5'-diphosphate + ATP = a ribonucleoside 5'-triphosphate + ADP. Functionally, major role in the synthesis of nucleoside triphosphates other than ATP. The ATP gamma phosphate is transferred to the NDP beta phosphate via a ping-pong mechanism, using a phosphorylated active-site intermediate. The protein is Nucleoside diphosphate kinase of Streptococcus thermophilus (strain CNRZ 1066).